Reading from the N-terminus, the 425-residue chain is Kynurenine/alpha-aminoadipate aminotransferase, mitochondrial (425 aa).

The N-terminal 29 residues, 1–29 (MNYARFITAASAARNPSPIRTMTDILSRG), are a transit peptide targeting the mitochondrion. Residue Arg20 coordinates substrate. Lys69 is modified (N6-acetyllysine). Tyr74 and Tyr142 together coordinate substrate. The residue at position 179 (Lys179) is an N6-acetyllysine. The disordered stretch occupies residues 181 to 208 (EDAKNPQKNTPKFLYTVPNGNNPTGNSL). The segment covering 198 to 208 (PNGNNPTGNSL) has biased composition (polar residues). Asn202 serves as a coordination point for substrate. At Lys263 the chain carries N6-(pyridoxal phosphate)lysine; alternate. N6-acetyllysine; alternate occurs at positions 263, 339, and 367. Lys263, Lys339, and Lys367 each carry N6-succinyllysine; alternate. Arg399 lines the substrate pocket. At Lys422 the chain carries N6-acetyllysine.

Belongs to the class-I pyridoxal-phosphate-dependent aminotransferase family. As to quaternary structure, homodimer. It depends on pyridoxal 5'-phosphate as a cofactor. In terms of tissue distribution, higher expression in the liver. Also found in heart, brain, kidney, pancreas, prostate, testis and ovary.

The protein resides in the mitochondrion. The enzyme catalyses glycine + 2-oxoglutarate = glyoxylate + L-glutamate. The catalysed reaction is L-kynurenine + 2-oxoglutarate = kynurenate + L-glutamate + H2O. It carries out the reaction L-kynurenine + glyoxylate = kynurenate + glycine + H2O. It catalyses the reaction 3-hydroxy-L-kynurenine + glyoxylate = xanthurenate + glycine + H2O. The enzyme catalyses 2-oxohexanoate + L-kynurenine = L-2-aminohexanoate + kynurenate + H2O. The catalysed reaction is 3-phenylpyruvate + L-kynurenine = kynurenate + L-phenylalanine + H2O. It carries out the reaction 4-methylsulfanyl-2-oxobutanoate + L-kynurenine = kynurenate + L-methionine + H2O. It catalyses the reaction 2-oxo-3-sulfanylpropanoate + L-kynurenine = kynurenate + L-cysteine + H2O. The enzyme catalyses indole-3-pyruvate + L-kynurenine = kynurenate + L-tryptophan + H2O. The catalysed reaction is 2-oxopentanoate + L-kynurenine = L-2-aminopentanoate + kynurenate + H2O. It carries out the reaction 4-methyl-2-oxopentanoate + L-kynurenine = kynurenate + L-leucine + H2O. It catalyses the reaction L-2-aminoadipate + 2-oxoglutarate = 2-oxoadipate + L-glutamate. The enzyme catalyses glyoxylate + L-methionine = 4-methylsulfanyl-2-oxobutanoate + glycine. The catalysed reaction is L-2-aminoadipate + glyoxylate = 2-oxoadipate + glycine. It carries out the reaction L-tyrosine + glyoxylate = 3-(4-hydroxyphenyl)pyruvate + glycine. It catalyses the reaction glyoxylate + L-phenylalanine = 3-phenylpyruvate + glycine. The enzyme catalyses L-tryptophan + glyoxylate = indole-3-pyruvate + glycine. The catalysed reaction is L-leucine + glyoxylate = 4-methyl-2-oxopentanoate + glycine. It carries out the reaction 2-oxobutanoate + L-kynurenine = (2S)-2-aminobutanoate + kynurenate + H2O. It catalyses the reaction 2-oxoadipate + L-kynurenine = L-2-aminoadipate + kynurenate + H2O. It functions in the pathway amino-acid degradation; L-lysine degradation via saccharopine pathway; glutaryl-CoA from L-lysine: step 4/6. With respect to regulation, kynurenine transaminase activity is competitively inhibited by aminoadipate, asparagine, glutamate, histidine, cysteine, lysine, 3-hydroxy-kynurenine and phenylalanine. In terms of biological role, transaminase with broad substrate specificity. Has transaminase activity towards aminoadipate, kynurenine, methionine and glutamate. Shows activity also towards tryptophan, aspartate and hydroxykynurenine. Accepts a variety of oxo-acids as amino-group acceptors, with a preference for 2-oxoglutarate, 2-oxocaproic acid, phenylpyruvate and alpha-oxo-gamma-methiol butyric acid. Can also use glyoxylate as amino-group acceptor (in vitro). The protein is Kynurenine/alpha-aminoadipate aminotransferase, mitochondrial of Homo sapiens (Human).